Reading from the N-terminus, the 180-residue chain is Hypoxanthine-guanine phosphoribosyltransferase (180 aa).

Diphosphate-binding residues include K43 and G44. Mg(2+) contacts are provided by E99 and D100. D103 serves as the catalytic Proton acceptor. Residues K131, 152 to 153, and D159 each bind GMP; that span reads FI. R165 serves as a coordination point for diphosphate.

It belongs to the purine/pyrimidine phosphoribosyltransferase family. Requires Mg(2+) as cofactor.

Its subcellular location is the cytoplasm. It carries out the reaction IMP + diphosphate = hypoxanthine + 5-phospho-alpha-D-ribose 1-diphosphate. The enzyme catalyses GMP + diphosphate = guanine + 5-phospho-alpha-D-ribose 1-diphosphate. It functions in the pathway purine metabolism; IMP biosynthesis via salvage pathway; IMP from hypoxanthine: step 1/1. It participates in purine metabolism; GMP biosynthesis via salvage pathway; GMP from guanine: step 1/1. Purine salvage pathway enzyme that catalyzes the transfer of the ribosyl-5-phosphate group from 5-phospho-alpha-D-ribose 1-diphosphate (PRPP) to the N9 position of the 6-oxopurines hypoxanthine and guanine to form the corresponding ribonucleotides IMP (inosine 5'-monophosphate) and GMP (guanosine 5'-monophosphate), with the release of PPi. This chain is Hypoxanthine-guanine phosphoribosyltransferase (hpt), found in Streptococcus mutans serotype c (strain ATCC 700610 / UA159).